A 201-amino-acid chain; its full sequence is Small ribosomal subunit protein uS4c (201 aa).

Residues 15 to 43 (LGALPGLTRKTPKSGSNQKKKFHSGKKEQ) are disordered. One can recognise an S4 RNA-binding domain in the interval 89-150 (MRLDNILFRL…NQRSKRLVQN (62 aa)).

The protein belongs to the universal ribosomal protein uS4 family. In terms of assembly, part of the 30S ribosomal subunit. Contacts protein S5. The interaction surface between S4 and S5 is involved in control of translational fidelity.

Its subcellular location is the plastid. It is found in the chloroplast. In terms of biological role, one of the primary rRNA binding proteins, it binds directly to 16S rRNA where it nucleates assembly of the body of the 30S subunit. With S5 and S12 plays an important role in translational accuracy. The chain is Small ribosomal subunit protein uS4c (rps4) from Sorghum bicolor (Sorghum).